The chain runs to 39 residues: uncharacterized protein (39 aa).

This is an uncharacterized protein from Haemophilus influenzae (strain ATCC 51907 / DSM 11121 / KW20 / Rd).